We begin with the raw amino-acid sequence, 425 residues long: Glutamyl-tRNA reductase (425 aa).

Residues 49-52 (TCNR), S107, 112-114 (EPQ), and Q118 contribute to the substrate site. The active-site Nucleophile is the C50. An NADP(+)-binding site is contributed by 187–192 (GAGETI).

Belongs to the glutamyl-tRNA reductase family. Homodimer.

It carries out the reaction (S)-4-amino-5-oxopentanoate + tRNA(Glu) + NADP(+) = L-glutamyl-tRNA(Glu) + NADPH + H(+). Its pathway is porphyrin-containing compound metabolism; protoporphyrin-IX biosynthesis; 5-aminolevulinate from L-glutamyl-tRNA(Glu): step 1/2. Functionally, catalyzes the NADPH-dependent reduction of glutamyl-tRNA(Glu) to glutamate 1-semialdehyde (GSA). The chain is Glutamyl-tRNA reductase from Pseudomonas putida (strain ATCC 47054 / DSM 6125 / CFBP 8728 / NCIMB 11950 / KT2440).